A 212-amino-acid polypeptide reads, in one-letter code: Dephospho-CoA kinase (212 aa).

Residues 4–204 (IVALTGGICS…RDYLKAEKTT (201 aa)) enclose the DPCK domain. Residue 12-17 (CSGKSV) participates in ATP binding.

It belongs to the CoaE family.

The protein localises to the cytoplasm. The catalysed reaction is 3'-dephospho-CoA + ATP = ADP + CoA + H(+). The protein operates within cofactor biosynthesis; coenzyme A biosynthesis; CoA from (R)-pantothenate: step 5/5. Catalyzes the phosphorylation of the 3'-hydroxyl group of dephosphocoenzyme A to form coenzyme A. The sequence is that of Dephospho-CoA kinase from Blochmanniella pennsylvanica (strain BPEN).